The chain runs to 132 residues: Ribosome-binding factor A (132 aa).

This sequence belongs to the RbfA family. In terms of assembly, monomer. Binds 30S ribosomal subunits, but not 50S ribosomal subunits or 70S ribosomes.

It is found in the cytoplasm. One of several proteins that assist in the late maturation steps of the functional core of the 30S ribosomal subunit. Associates with free 30S ribosomal subunits (but not with 30S subunits that are part of 70S ribosomes or polysomes). Required for efficient processing of 16S rRNA. May interact with the 5'-terminal helix region of 16S rRNA. The protein is Ribosome-binding factor A of Pseudomonas putida (strain GB-1).